A 154-amino-acid chain; its full sequence is Superoxide dismutase [Cu-Zn] (154 aa).

Residues histidine 47, histidine 49, and histidine 64 each coordinate Cu cation. Cysteine 58 and cysteine 147 are joined by a disulfide. Positions 64, 72, 81, and 84 each coordinate Zn(2+). Histidine 121 serves as a coordination point for Cu cation. Positions 122 to 143 are disordered; the sequence is GGTDDLGKGGNEESLKTGNAGP. Residues 123 to 136 show a composition bias toward basic and acidic residues; sequence GTDDLGKGGNEESL. Arginine 144 is a substrate binding site.

It belongs to the Cu-Zn superoxide dismutase family. Homodimer. Cu cation is required as a cofactor. Zn(2+) serves as cofactor.

It localises to the cytoplasm. The catalysed reaction is 2 superoxide + 2 H(+) = H2O2 + O2. Functionally, destroys radicals which are normally produced within the cells and which are toxic to biological systems. This is Superoxide dismutase [Cu-Zn] (SOD1) from Cordyceps militaris (Caterpillar fungus).